The primary structure comprises 370 residues: Ribosomal RNA small subunit methyltransferase H (370 aa).

S-adenosyl-L-methionine-binding positions include 85–87 (GGH), aspartate 104, tyrosine 131, aspartate 152, and glutamine 159. Composition is skewed to basic and acidic residues over residues 332-345 (GAER…ERNP) and 353-370 (RALE…RDAR). Residues 332–370 (GAERATPEEIERNPRSAPVRLRALEKVAGRPTTARRDAR) form a disordered region.

The protein belongs to the methyltransferase superfamily. RsmH family.

The protein localises to the cytoplasm. It catalyses the reaction cytidine(1402) in 16S rRNA + S-adenosyl-L-methionine = N(4)-methylcytidine(1402) in 16S rRNA + S-adenosyl-L-homocysteine + H(+). Specifically methylates the N4 position of cytidine in position 1402 (C1402) of 16S rRNA. The sequence is that of Ribosomal RNA small subunit methyltransferase H from Mycobacterium sp. (strain KMS).